A 174-amino-acid polypeptide reads, in one-letter code: RNA pyrophosphohydrolase (174 aa).

Positions 6–149 (GFRANVGIII…KRDVYRKVMK (144 aa)) constitute a Nudix hydrolase domain. The short motif at 38-59 (GGVDEGESAEQAMYRELYEEVG) is the Nudix box element.

This sequence belongs to the Nudix hydrolase family. RppH subfamily. A divalent metal cation serves as cofactor.

Its function is as follows. Accelerates the degradation of transcripts by removing pyrophosphate from the 5'-end of triphosphorylated RNA, leading to a more labile monophosphorylated state that can stimulate subsequent ribonuclease cleavage. The polypeptide is RNA pyrophosphohydrolase (Shewanella loihica (strain ATCC BAA-1088 / PV-4)).